A 466-amino-acid polypeptide reads, in one-letter code: Adenosylhomocysteinase (466 aa).

The substrate site is built by Thr57, Asp132, and Glu192. Position 193-195 (193-195 (TTT)) interacts with NAD(+). The substrate site is built by Lys222 and Asp226. Residues Asn227, 256-261 (GYGDVG), Glu279, Asn314, 335-337 (IGH), and Asn380 each bind NAD(+).

The protein belongs to the adenosylhomocysteinase family. NAD(+) is required as a cofactor.

It localises to the cytoplasm. It carries out the reaction S-adenosyl-L-homocysteine + H2O = L-homocysteine + adenosine. Its pathway is amino-acid biosynthesis; L-homocysteine biosynthesis; L-homocysteine from S-adenosyl-L-homocysteine: step 1/1. May play a key role in the regulation of the intracellular concentration of adenosylhomocysteine. In Brucella melitensis biotype 2 (strain ATCC 23457), this protein is Adenosylhomocysteinase.